We begin with the raw amino-acid sequence, 358 residues long: Porphobilinogen deaminase, chloroplastic (358 aa).

An N-terminal signal peptide occupies residues 1 to 24 (MPPPPRCAATTAHHSLLGSPTCLA). Position 290 is an S-(dipyrrolylmethanemethyl)cysteine (C290).

The protein belongs to the HMBS family. The cofactor is dipyrromethane.

The protein resides in the plastid. It is found in the chloroplast. It carries out the reaction 4 porphobilinogen + H2O = hydroxymethylbilane + 4 NH4(+). Its pathway is porphyrin-containing compound metabolism; protoporphyrin-IX biosynthesis; coproporphyrinogen-III from 5-aminolevulinate: step 2/4. It functions in the pathway porphyrin-containing compound metabolism; chlorophyll biosynthesis. Functionally, tetrapolymerization of the monopyrrole PBG into the hydroxymethylbilane pre-uroporphyrinogen in several discrete steps. This is Porphobilinogen deaminase, chloroplastic (HEMC) from Oryza sativa subsp. japonica (Rice).